A 359-amino-acid polypeptide reads, in one-letter code: tRNA N6-adenosine threonylcarbamoyltransferase (359 aa).

Fe cation contacts are provided by His115 and His119. Substrate contacts are provided by residues 137-141, Asp170, Gly183, and Asn283; that span reads LVSGG. Asp311 lines the Fe cation pocket. The segment at 328–359 is disordered; that stretch reads APDSLDIAPRSRWPLDEKSAPVFGTGRRGAKA.

Belongs to the KAE1 / TsaD family. Fe(2+) is required as a cofactor.

It localises to the cytoplasm. The catalysed reaction is L-threonylcarbamoyladenylate + adenosine(37) in tRNA = N(6)-L-threonylcarbamoyladenosine(37) in tRNA + AMP + H(+). Functionally, required for the formation of a threonylcarbamoyl group on adenosine at position 37 (t(6)A37) in tRNAs that read codons beginning with adenine. Is involved in the transfer of the threonylcarbamoyl moiety of threonylcarbamoyl-AMP (TC-AMP) to the N6 group of A37, together with TsaE and TsaB. TsaD likely plays a direct catalytic role in this reaction. The chain is tRNA N6-adenosine threonylcarbamoyltransferase from Brucella melitensis biotype 2 (strain ATCC 23457).